We begin with the raw amino-acid sequence, 409 residues long: BRCA1-A complex subunit Abraxas 1 (409 aa).

Residues 7–160 form the MPN domain; the sequence is SAVLSGFVLG…HSLYKPQKGL (154 aa). Phosphoserine is present on Ser48. The stretch at 206–260 forms a coiled coil; it reads DGSLKEVHKINEMYASLQEELKSICKKVEDSEQAVDKLVKDVNRLKREIEKRRGA. Positions 362 to 372 are enriched in basic and acidic residues; the sequence is LLDTQDKRSKA. Residues 362–409 are disordered; that stretch reads LLDTQDKRSKADTGSSNQDKASKMSSPETDEEIEKMKGFGEYSRSPTF. Residues 373–388 show a composition bias toward polar residues; it reads DTGSSNQDKASKMSSP. Phosphoserine occurs at positions 386 and 387. The residue at position 390 (Thr390) is a Phosphothreonine. Phosphoserine is present on residues Ser404 and Ser406. The short motif at 406–409 is the pSXXF motif element; it reads SPTF.

It belongs to the FAM175 family. Abraxas subfamily. In terms of assembly, component of the ARISC complex, at least composed of UIMC1/RAP80, ABRAXAS1, BRCC3/BRCC36, BABAM2 and BABAM1/NBA1. Component of the BRCA1-A complex, at least composed of BRCA1, BARD1, UIMC1/RAP80, ABRAXAS1, BRCC3/BRCC36, BABAM2 and BABAM1/NBA1. In the complex, interacts directly with UIMC1/RAP80, BRCC3/BRCC36 and BABAM2. Interacts directly (when phosphorylated at Ser-406) with BRCA1. Homodimer. The homodimer interacts directly (when phosphorylated at Ser-404 and Ser-406) with two BRCA1 chains, giving rise to a heterotetramer. Binds polyubiquitin. Post-translationally, phosphorylation of Ser-406 of the pSXXF motif by ATM or ATR constitutes a specific recognition motif for the BRCT domain of BRCA1. Ionizing radiation promotes rapid phosphorylation at Ser-404 and Ser-406 by ATM; this promotes recruitment of BRCA1 to sites of DNA damage.

Its subcellular location is the nucleus. In terms of biological role, involved in DNA damage response and double-strand break (DSB) repair. Component of the BRCA1-A complex, acting as a central scaffold protein that assembles the various components of the complex and mediates the recruitment of BRCA1. The BRCA1-A complex specifically recognizes 'Lys-63'-linked ubiquitinated histones H2A and H2AX at DNA lesion sites, leading to target the BRCA1-BARD1 heterodimer to sites of DNA damage at DSBs. This complex also possesses deubiquitinase activity that specifically removes 'Lys-63'-linked ubiquitin on histones H2A and H2AX. This chain is BRCA1-A complex subunit Abraxas 1, found in Homo sapiens (Human).